The sequence spans 621 residues: Putative acyltransferase plsB1 (621 aa).

The HXXXXD motif signature appears at 123–128; sequence HRSYLD.

It belongs to the GPAT/DAPAT family.

The protein localises to the cell membrane. The polypeptide is Putative acyltransferase plsB1 (plsB1) (Mycobacterium bovis (strain ATCC BAA-935 / AF2122/97)).